The chain runs to 862 residues: DNA mismatch repair protein MutS (862 aa).

604-611 (GPNMAGKS) provides a ligand contact to ATP.

Belongs to the DNA mismatch repair MutS family.

This protein is involved in the repair of mismatches in DNA. It is possible that it carries out the mismatch recognition step. This protein has a weak ATPase activity. The sequence is that of DNA mismatch repair protein MutS from Brevibacillus brevis (strain 47 / JCM 6285 / NBRC 100599).